Here is a 559-residue protein sequence, read N- to C-terminus: Dihydroxy-acid dehydratase (559 aa).

Cys52 lines the [2Fe-2S] cluster pocket. Asp84 serves as a coordination point for Mg(2+). Residue Cys125 coordinates [2Fe-2S] cluster. Residues Asp126 and Lys127 each contribute to the Mg(2+) site. At Lys127 the chain carries N6-carboxylysine. Position 197 (Cys197) interacts with [2Fe-2S] cluster. A Mg(2+)-binding site is contributed by Glu447. The Proton acceptor role is filled by Ser473.

This sequence belongs to the IlvD/Edd family. Homodimer. The cofactor is [2Fe-2S] cluster. Mg(2+) serves as cofactor.

The enzyme catalyses (2R)-2,3-dihydroxy-3-methylbutanoate = 3-methyl-2-oxobutanoate + H2O. It carries out the reaction (2R,3R)-2,3-dihydroxy-3-methylpentanoate = (S)-3-methyl-2-oxopentanoate + H2O. It participates in amino-acid biosynthesis; L-isoleucine biosynthesis; L-isoleucine from 2-oxobutanoate: step 3/4. The protein operates within amino-acid biosynthesis; L-valine biosynthesis; L-valine from pyruvate: step 3/4. Functionally, functions in the biosynthesis of branched-chain amino acids. Catalyzes the dehydration of (2R,3R)-2,3-dihydroxy-3-methylpentanoate (2,3-dihydroxy-3-methylvalerate) into 2-oxo-3-methylpentanoate (2-oxo-3-methylvalerate) and of (2R)-2,3-dihydroxy-3-methylbutanoate (2,3-dihydroxyisovalerate) into 2-oxo-3-methylbutanoate (2-oxoisovalerate), the penultimate precursor to L-isoleucine and L-valine, respectively. The sequence is that of Dihydroxy-acid dehydratase from Roseiflexus sp. (strain RS-1).